Consider the following 381-residue polypeptide: F-box/LRR-repeat protein At4g14103 (381 aa).

In terms of domain architecture, F-box spans 7–60; it reads RDVISSLPDDISSHILSFLPTKEAASTSVLSKKWRYLFAFVPNLDLDDSVYLNP. 6 LRR repeats span residues 118-146, 171-196, 218-243, 249-274, 299-330, and 331-356; these read DLHLNLESEFLLPSQVYLCKTLVWLKLRF, HFEEHGVGLTKLLSGCPMLEDLVLDD, SWQERDEFPKSVLLDTPNLVYLKFTD, YPKVNLDSLVEAHIDLRLLKPLLINY, TLYLSANTLQVLTYSCDAIPIFNNLTHLTIES, and NPRVGWQSVPGLLKNSPNLETLIFQG.

The polypeptide is F-box/LRR-repeat protein At4g14103 (Arabidopsis thaliana (Mouse-ear cress)).